A 117-amino-acid polypeptide reads, in one-letter code: Hainantoxin-XV-3 (117 aa).

An N-terminal signal peptide occupies residues 1–20 (MKLCAVIIASLLVCVAVASS). Residues 20 to 55 (SSDNQKEFAQEKEMTREETQSLGEHEKDDEVTGSEE) form a disordered region. The propeptide occupies 21–56 (SDNQKEFAQEKEMTREETQSLGEHEKDDEVTGSEER). A compositionally biased stretch (basic and acidic residues) spans 23–55 (NQKEFAQEKEMTREETQSLGEHEKDDEVTGSEE). Cystine bridges form between Cys58/Cys72, Cys65/Cys78, Cys69/Cys115, and Cys71/Cys91.

Belongs to the neurotoxin 03 (Tx2) family. 02 subfamily. HNTX-XV sub-subfamily. In terms of tissue distribution, expressed by the venom gland.

The protein localises to the secreted. In terms of biological role, putative ion channel inhibitor. The sequence is that of Hainantoxin-XV-3 from Cyriopagopus hainanus (Chinese bird spider).